Reading from the N-terminus, the 375-residue chain is MTNRKEIIGDAEKIVIKIGTTSISREDGSLNNEFMDTIASQVSELHRAGKQIILVSSGSIGIGIEILDLGCRPKEIPVRQAAAAVGQGVLMQHWTEAFQKYGLNVAQILLTYDSFTNRLTYLNLRNSISTLLSYGVIPIINENDPICVHEIEATLGDNDKLSAMVASKMEADLLILFTDIDGLYDKNPKRHDDAVLLRTVEEITPTIESYGGNPTSMKGVGGMRTKIDAAKICNISGCYMVIANSNVDDGIRRILDGEELGTLFLTNQFVHKNRIRWIILARSSGSIVVDTGAKEALAKRMSLLPSGVLGVAGTFDRGDIVKLECDGVVFGKGITDYTSEELKAIKGKQTNEIADILGYKNYDHVVQKDNIGLFK.

K17 serves as a coordination point for ATP. 3 residues coordinate substrate: S57, D144, and N158. 178 to 179 (TD) is a binding site for ATP. The PUA domain occupies 284 to 360 (SGSIVVDTGA…NEIADILGYK (77 aa)).

This sequence belongs to the glutamate 5-kinase family.

It is found in the cytoplasm. The catalysed reaction is L-glutamate + ATP = L-glutamyl 5-phosphate + ADP. It functions in the pathway amino-acid biosynthesis; L-proline biosynthesis; L-glutamate 5-semialdehyde from L-glutamate: step 1/2. Its function is as follows. Catalyzes the transfer of a phosphate group to glutamate to form L-glutamate 5-phosphate. The protein is Glutamate 5-kinase of Methanococcoides burtonii (strain DSM 6242 / NBRC 107633 / OCM 468 / ACE-M).